A 315-amino-acid chain; its full sequence is DNA-directed RNA polymerase subunit alpha (315 aa).

The alpha N-terminal domain (alpha-NTD) stretch occupies residues 1–228 (MLEIEKPKIE…EHFKLFMTLT (228 aa)). Residues 245 to 315 (KEKVLEMTIE…LGLGLKKSDE (71 aa)) are alpha C-terminal domain (alpha-CTD).

It belongs to the RNA polymerase alpha chain family. In terms of assembly, homodimer. The RNAP catalytic core consists of 2 alpha, 1 beta, 1 beta' and 1 omega subunit. When a sigma factor is associated with the core the holoenzyme is formed, which can initiate transcription.

The enzyme catalyses RNA(n) + a ribonucleoside 5'-triphosphate = RNA(n+1) + diphosphate. Functionally, DNA-dependent RNA polymerase catalyzes the transcription of DNA into RNA using the four ribonucleoside triphosphates as substrates. The protein is DNA-directed RNA polymerase subunit alpha of Clostridium novyi (strain NT).